A 442-amino-acid polypeptide reads, in one-letter code: tRNA-2-methylthio-N(6)-dimethylallyladenosine synthase (442 aa).

An MTTase N-terminal domain is found at 3 to 120 (KKLYIETHGC…LPEMIDAARI (118 aa)). [4Fe-4S] cluster-binding residues include C12, C49, C83, C157, C161, and C164. One can recognise a Radical SAM core domain in the interval 143-375 (RIDGPSAYVS…QHRLNQQGFE (233 aa)). One can recognise a TRAM domain in the interval 378–442 (RQMVGSVQRI…PHSLRGSLIQ (65 aa)).

The protein belongs to the methylthiotransferase family. MiaB subfamily. In terms of assembly, monomer. It depends on [4Fe-4S] cluster as a cofactor.

The protein resides in the cytoplasm. It catalyses the reaction N(6)-dimethylallyladenosine(37) in tRNA + (sulfur carrier)-SH + AH2 + 2 S-adenosyl-L-methionine = 2-methylsulfanyl-N(6)-dimethylallyladenosine(37) in tRNA + (sulfur carrier)-H + 5'-deoxyadenosine + L-methionine + A + S-adenosyl-L-homocysteine + 2 H(+). Its function is as follows. Catalyzes the methylthiolation of N6-(dimethylallyl)adenosine (i(6)A), leading to the formation of 2-methylthio-N6-(dimethylallyl)adenosine (ms(2)i(6)A) at position 37 in tRNAs that read codons beginning with uridine. The polypeptide is tRNA-2-methylthio-N(6)-dimethylallyladenosine synthase (Pseudomonas fluorescens (strain Pf0-1)).